The chain runs to 617 residues: Protein AsmA (617 aa).

Over methionine 1–arginine 3 the chain is Cytoplasmic. The chain crosses the membrane as a helical span at residues phenylalanine 4–leucine 24. Residues leucine 25–methionine 617 are Periplasmic-facing. Polar residues predominate over residues threonine 302 to leucine 319. Positions threonine 302–arginine 321 are disordered.

It belongs to the AsmA family.

The protein localises to the cell inner membrane. Its function is as follows. Could be involved in the assembly of outer membrane proteins. May indirectly influence the assembly of outer membrane proteins, potentially by altering outer membrane fluidity. Inhibits the assembly of mutant forms of outer membrane protein F (OmpF). The sequence is that of Protein AsmA from Escherichia coli (strain K12).